The primary structure comprises 414 residues: Peptide chain release factor subunit 1 (414 aa).

It belongs to the eukaryotic release factor 1 family. In terms of assembly, heterodimer of two subunits, one of which binds GTP.

The protein localises to the cytoplasm. Functionally, directs the termination of nascent peptide synthesis (translation) in response to the termination codons UAA, UAG and UGA. The protein is Peptide chain release factor subunit 1 (prf1) of Pyrococcus abyssi (strain GE5 / Orsay).